Here is a 242-residue protein sequence, read N- to C-terminus: UPF0246 protein SPH_1662 (242 aa).

The protein belongs to the UPF0246 family.

The polypeptide is UPF0246 protein SPH_1662 (Streptococcus pneumoniae (strain Hungary19A-6)).